The following is a 320-amino-acid chain: Glutaminase (320 aa).

Ser-70, Asn-121, Glu-165, Asn-172, Tyr-196, Tyr-248, and Val-266 together coordinate substrate.

Belongs to the glutaminase family. Homotetramer.

The catalysed reaction is L-glutamine + H2O = L-glutamate + NH4(+). The protein is Glutaminase of Mycobacterium marinum (strain ATCC BAA-535 / M).